We begin with the raw amino-acid sequence, 339 residues long: Deubiquitinase and deneddylase Dub2 (339 aa).

A helical transmembrane segment spans residues 36-56; that stretch reads IIIALFLIVISCGLILCAYTF. Catalysis depends on residues histidine 203, aspartate 220, and cysteine 282.

This sequence belongs to the peptidase C48 family.

The protein resides in the secreted. It localises to the host cell. Its subcellular location is the membrane. Effector proteins function to alter host cell physiology and promote bacterial survival in host tissues. This protease possesses deubiquitinating and deneddylating activities. This chain is Deubiquitinase and deneddylase Dub2 (cdu2), found in Chlamydia trachomatis serovar L2 (strain ATCC VR-902B / DSM 19102 / 434/Bu).